The sequence spans 265 residues: Phosphatidylserine decarboxylase proenzyme (265 aa).

Active-site charge relay system; for autoendoproteolytic cleavage activity residues include Asp86, His142, and Ser226. The active-site Schiff-base intermediate with substrate; via pyruvic acid; for decarboxylase activity is Ser226. Pyruvic acid (Ser); by autocatalysis is present on Ser226.

Belongs to the phosphatidylserine decarboxylase family. PSD-B subfamily. Prokaryotic type I sub-subfamily. Heterodimer of a large membrane-associated beta subunit and a small pyruvoyl-containing alpha subunit. Requires pyruvate as cofactor. Post-translationally, is synthesized initially as an inactive proenzyme. Formation of the active enzyme involves a self-maturation process in which the active site pyruvoyl group is generated from an internal serine residue via an autocatalytic post-translational modification. Two non-identical subunits are generated from the proenzyme in this reaction, and the pyruvate is formed at the N-terminus of the alpha chain, which is derived from the carboxyl end of the proenzyme. The autoendoproteolytic cleavage occurs by a canonical serine protease mechanism, in which the side chain hydroxyl group of the serine supplies its oxygen atom to form the C-terminus of the beta chain, while the remainder of the serine residue undergoes an oxidative deamination to produce ammonia and the pyruvoyl prosthetic group on the alpha chain. During this reaction, the Ser that is part of the protease active site of the proenzyme becomes the pyruvoyl prosthetic group, which constitutes an essential element of the active site of the mature decarboxylase.

The protein resides in the cell membrane. It catalyses the reaction a 1,2-diacyl-sn-glycero-3-phospho-L-serine + H(+) = a 1,2-diacyl-sn-glycero-3-phosphoethanolamine + CO2. The protein operates within phospholipid metabolism; phosphatidylethanolamine biosynthesis; phosphatidylethanolamine from CDP-diacylglycerol: step 2/2. Catalyzes the formation of phosphatidylethanolamine (PtdEtn) from phosphatidylserine (PtdSer). This Anoxybacillus flavithermus (strain DSM 21510 / WK1) protein is Phosphatidylserine decarboxylase proenzyme.